A 282-amino-acid polypeptide reads, in one-letter code: Armadillo repeat-containing protein 1 (282 aa).

N-acetylmethionine is present on methionine 1. An ARM repeat occupies 39–81; sequence GCLPGLILFMDHPNPPVVHSALLALRYLAECRANREKMKGELG. The residue at position 137 (threonine 137) is a Phosphothreonine. 4 positions are modified to phosphoserine: serine 189, serine 246, serine 260, and serine 267. Residues 239–261 are disordered; it reads DYLPEDESPTKEQDKAVSRVGSH. The span at 246–255 shows a compositional bias: basic and acidic residues; sequence SPTKEQDKAV.

In terms of assembly, interacts with mitochondrial contact site and cristae organizing system (MICOS) complex components IMMT/MIC60 and MICOS10/MIC10. Interacts with mitochondrial outer membrane sorting assembly machinery (SAM) complex components SAMM50 and MTX1.

Its subcellular location is the cytoplasm. It is found in the mitochondrion. It localises to the mitochondrion outer membrane. In association with mitochondrial contact site and cristae organizing system (MICOS) complex components and mitochondrial outer membrane sorting assembly machinery (SAM) complex components may regulate mitochondrial dynamics playing a role in determining mitochondrial length, distribution and motility. The protein is Armadillo repeat-containing protein 1 (ARMC1) of Bos taurus (Bovine).